A 130-amino-acid chain; its full sequence is Iron-sulfur cluster insertion protein ErpA (130 aa).

3 residues coordinate iron-sulfur cluster: Cys46, Cys116, and Cys118.

The protein belongs to the HesB/IscA family. In terms of assembly, homodimer. The cofactor is iron-sulfur cluster.

Functionally, required for insertion of 4Fe-4S clusters for at least IspG. The protein is Iron-sulfur cluster insertion protein ErpA of Legionella pneumophila (strain Lens).